Here is a 338-residue protein sequence, read N- to C-terminus: D-erythrose-4-phosphate dehydrogenase (338 aa).

11–12 provides a ligand contact to NAD(+); that stretch reads RI. Substrate contacts are provided by residues 153–155, Arg199, 212–213, and Arg235; these read SCT and TK. The active-site Nucleophile is Cys154. Position 317 (Asn317) interacts with NAD(+).

It belongs to the glyceraldehyde-3-phosphate dehydrogenase family. Epd subfamily. As to quaternary structure, homotetramer.

The protein resides in the cytoplasm. The catalysed reaction is D-erythrose 4-phosphate + NAD(+) + H2O = 4-phospho-D-erythronate + NADH + 2 H(+). The protein operates within cofactor biosynthesis; pyridoxine 5'-phosphate biosynthesis; pyridoxine 5'-phosphate from D-erythrose 4-phosphate: step 1/5. Its function is as follows. Catalyzes the NAD-dependent conversion of D-erythrose 4-phosphate to 4-phosphoerythronate. This is D-erythrose-4-phosphate dehydrogenase from Shewanella piezotolerans (strain WP3 / JCM 13877).